Consider the following 469-residue polypeptide: Glutamate--tRNA ligase (469 aa).

The 'HIGH' region signature appears at 9–19 (PSPTGFLHVGG). Residues cysteine 98, cysteine 100, cysteine 125, and aspartate 127 each contribute to the Zn(2+) site. The 'KMSKS' region signature appears at 236–240 (KLSKR). Lysine 239 is an ATP binding site.

This sequence belongs to the class-I aminoacyl-tRNA synthetase family. Glutamate--tRNA ligase type 1 subfamily. In terms of assembly, monomer. The cofactor is Zn(2+).

The protein localises to the cytoplasm. The enzyme catalyses tRNA(Glu) + L-glutamate + ATP = L-glutamyl-tRNA(Glu) + AMP + diphosphate. Its function is as follows. Catalyzes the attachment of glutamate to tRNA(Glu) in a two-step reaction: glutamate is first activated by ATP to form Glu-AMP and then transferred to the acceptor end of tRNA(Glu). In Shewanella halifaxensis (strain HAW-EB4), this protein is Glutamate--tRNA ligase.